A 461-amino-acid chain; its full sequence is UDP-glycosyltransferase 82A1 (461 aa).

UDP-alpha-D-glucose is bound by residues serine 292, 349–351 (APQ), 366–374 (HCGWNSTME), and 388–391 (AGDQ).

Belongs to the UDP-glycosyltransferase family.

The sequence is that of UDP-glycosyltransferase 82A1 (UGT82A1) from Arabidopsis thaliana (Mouse-ear cress).